We begin with the raw amino-acid sequence, 364 residues long: DNA polymerase IV (364 aa).

Residues 14 to 198 (IIHIDMDAFF…LPIEKFHGVG (185 aa)) form the UmuC domain. Mg(2+) contacts are provided by D18 and D116. E117 is an active-site residue.

This sequence belongs to the DNA polymerase type-Y family. As to quaternary structure, monomer. Requires Mg(2+) as cofactor.

Its subcellular location is the cytoplasm. The catalysed reaction is DNA(n) + a 2'-deoxyribonucleoside 5'-triphosphate = DNA(n+1) + diphosphate. In terms of biological role, poorly processive, error-prone DNA polymerase involved in untargeted mutagenesis. Copies undamaged DNA at stalled replication forks, which arise in vivo from mismatched or misaligned primer ends. These misaligned primers can be extended by PolIV. Exhibits no 3'-5' exonuclease (proofreading) activity. May be involved in translesional synthesis, in conjunction with the beta clamp from PolIII. The polypeptide is DNA polymerase IV (Streptococcus pyogenes serotype M6 (strain ATCC BAA-946 / MGAS10394)).